A 373-amino-acid polypeptide reads, in one-letter code: Arfaptin-1 (373 aa).

The interval 1-47 (MAQESPKNSAAEIPVTSNGEVDDSREHSFNRDLKHSLPSGLGLSETQ) is disordered. Residue Ala-2 is modified to N-acetylalanine. A phosphoserine mark is found at Ser-5, Ser-28, Ser-36, Ser-39, Ser-69, Ser-79, and Ser-132. A compositionally biased stretch (basic and acidic residues) spans 22-35 (DDSREHSFNRDLKH). Positions 153–353 (TVDLELEAQI…NQKQLEQTLK (201 aa)) constitute an AH domain. A Phosphothreonine modification is found at Thr-361.

As to quaternary structure, forms homodimers or heterodimers with ARFIP2. Interacts with non-myristoylated GTP-bound ARF3, but not to GDP-bound ARF3. Interacts with ARF1. Binds with lower affinity to ARF5 and with very little affinity to ARF6. Interacts with ARL1. Interacts with ATG9A. Post-translationally, phosphorylated by PRKD1; phosphorylation delocalizes ARFIP1 from the Golgi and disrupts its ability to inhibit the activity of ADP-ribosylation factor, an important component of the vesicle scission machinery. As to expression, ubiquitously expressed. Higher levels in liver, pancreas, placenta, skeletal muscle and heart.

The protein localises to the golgi apparatus. It localises to the trans-Golgi network membrane. In terms of biological role, plays a role in controlling biogenesis of secretory granules at the trans-Golgi network. Mechanistically, binds ARF-GTP at the neck of a growing secretory granule precursor and forms a protective scaffold. Once the granule precursor has been completely loaded, active PRKD1 phosphorylates ARFIP1 and releases it from ARFs. In turn, ARFs induce fission. Through this mechanism, ensures proper secretory granule formation at the Golgi of pancreatic beta cells. This is Arfaptin-1 from Homo sapiens (Human).